The sequence spans 275 residues: 3-methyl-2-oxobutanoate hydroxymethyltransferase (275 aa).

Residues aspartate 44 and aspartate 83 each coordinate Mg(2+). 3-methyl-2-oxobutanoate is bound by residues 44 to 45 (DS), aspartate 83, and lysine 113. Glutamate 115 is a binding site for Mg(2+). Glutamate 182 acts as the Proton acceptor in catalysis.

The protein belongs to the PanB family. As to quaternary structure, homodecamer; pentamer of dimers. The cofactor is Mg(2+).

It is found in the cytoplasm. The enzyme catalyses 3-methyl-2-oxobutanoate + (6R)-5,10-methylene-5,6,7,8-tetrahydrofolate + H2O = 2-dehydropantoate + (6S)-5,6,7,8-tetrahydrofolate. It participates in cofactor biosynthesis; (R)-pantothenate biosynthesis; (R)-pantoate from 3-methyl-2-oxobutanoate: step 1/2. Catalyzes the reversible reaction in which hydroxymethyl group from 5,10-methylenetetrahydrofolate is transferred onto alpha-ketoisovalerate to form ketopantoate. This Clostridium botulinum (strain 657 / Type Ba4) protein is 3-methyl-2-oxobutanoate hydroxymethyltransferase.